We begin with the raw amino-acid sequence, 280 residues long: uncharacterized protein (280 aa).

3 helical membrane passes run 15–35 (IVDI…INRL), 68–88 (IGFI…ILAG), and 94–114 (IVIG…VFLI).

Belongs to the MscS (TC 1.A.23) family.

It is found in the cell membrane. In terms of biological role, may play a role in resistance to osmotic downshock. This is an uncharacterized protein from Bacillus subtilis (strain 168).